The chain runs to 142 residues: C-type lectin 13 (142 aa).

The signal sequence occupies residues 1–23 (MGRLVFVSFGGWDVFLSLSGTGA). Disulfide bonds link C25-C36, C53-C138, and C115-C130. The C-type lectin domain maps to 32–139 (YEGHCYRVFQ…CSKTHNVVCK (108 aa)).

The protein belongs to the snaclec family. As to quaternary structure, heteromultimer; disulfide-linked. As to expression, expressed by the venom gland.

The protein localises to the secreted. Functionally, interferes with one step of hemostasis (modulation of platelet aggregation, or coagulation cascade, for example). The sequence is that of C-type lectin 13 from Crotalus adamanteus (Eastern diamondback rattlesnake).